The following is a 159-amino-acid chain: NADH-quinone oxidoreductase subunit B (159 aa).

[4Fe-4S] cluster-binding residues include cysteine 32, cysteine 33, cysteine 97, and cysteine 126.

The protein belongs to the complex I 20 kDa subunit family. In terms of assembly, NDH-1 is composed of 14 different subunits. Subunits NuoB, C, D, E, F, and G constitute the peripheral sector of the complex. The cofactor is [4Fe-4S] cluster.

It localises to the cell inner membrane. The enzyme catalyses a quinone + NADH + 5 H(+)(in) = a quinol + NAD(+) + 4 H(+)(out). NDH-1 shuttles electrons from NADH, via FMN and iron-sulfur (Fe-S) centers, to quinones in the respiratory chain. The immediate electron acceptor for the enzyme in this species is believed to be ubiquinone. Couples the redox reaction to proton translocation (for every two electrons transferred, four hydrogen ions are translocated across the cytoplasmic membrane), and thus conserves the redox energy in a proton gradient. The polypeptide is NADH-quinone oxidoreductase subunit B (Helicobacter pylori (strain P12)).